The chain runs to 433 residues: Putative wall-associated receptor kinase-like 16 (433 aa).

Residues 1–22 form the signal peptide; that stretch reads MKLQHVVYLVAIFFVVAIFVIA. Residues 23-29 are Extracellular-facing; it reads CIEENKY. Residues 30 to 50 form a helical membrane-spanning segment; the sequence is LVWIMIILANTTNILSLVRSI. Residues 51-433 lie on the Cytoplasmic side of the membrane; the sequence is SYIKNIRKHQ…VARFDIEAGR (383 aa). At threonine 97 the chain carries Phosphothreonine. Residues 108-391 form the Protein kinase domain; that stretch reads YDVSRILGQG…RAKTTKHNWL (284 aa). Residues 114-122 and lysine 136 each bind ATP; that span reads LGQGGQWTV. Residue tyrosine 181 is modified to Phosphotyrosine. Aspartate 233 functions as the Proton acceptor in the catalytic mechanism. Threonine 267 and threonine 272 each carry phosphothreonine. Tyrosine 280 bears the Phosphotyrosine mark.

It belongs to the protein kinase superfamily. Ser/Thr protein kinase family.

The protein localises to the membrane. The catalysed reaction is L-seryl-[protein] + ATP = O-phospho-L-seryl-[protein] + ADP + H(+). The enzyme catalyses L-threonyl-[protein] + ATP = O-phospho-L-threonyl-[protein] + ADP + H(+). Its function is as follows. Putative serine/threonine-protein kinase that may function as a signaling receptor of extracellular matrix component. The sequence is that of Putative wall-associated receptor kinase-like 16 (WAKL16) from Arabidopsis thaliana (Mouse-ear cress).